Reading from the N-terminus, the 317-residue chain is Transaldolase (317 aa).

The active-site Schiff-base intermediate with substrate is the Lys-132.

This sequence belongs to the transaldolase family. Type 1 subfamily. In terms of assembly, homodimer.

It localises to the cytoplasm. The enzyme catalyses D-sedoheptulose 7-phosphate + D-glyceraldehyde 3-phosphate = D-erythrose 4-phosphate + beta-D-fructose 6-phosphate. Its pathway is carbohydrate degradation; pentose phosphate pathway; D-glyceraldehyde 3-phosphate and beta-D-fructose 6-phosphate from D-ribose 5-phosphate and D-xylulose 5-phosphate (non-oxidative stage): step 2/3. Functionally, transaldolase is important for the balance of metabolites in the pentose-phosphate pathway. This Edwardsiella ictaluri (strain 93-146) protein is Transaldolase.